Reading from the N-terminus, the 323-residue chain is Lipoyl synthase (323 aa).

[4Fe-4S] cluster contacts are provided by C65, C70, C76, C91, C95, C98, and S304. The 217-residue stretch at 77–293 (FNNGTATFMI…KKEALSIGFT (217 aa)) folds into the Radical SAM core domain.

This sequence belongs to the radical SAM superfamily. Lipoyl synthase family. It depends on [4Fe-4S] cluster as a cofactor.

It is found in the cytoplasm. It catalyses the reaction [[Fe-S] cluster scaffold protein carrying a second [4Fe-4S](2+) cluster] + N(6)-octanoyl-L-lysyl-[protein] + 2 oxidized [2Fe-2S]-[ferredoxin] + 2 S-adenosyl-L-methionine + 4 H(+) = [[Fe-S] cluster scaffold protein] + N(6)-[(R)-dihydrolipoyl]-L-lysyl-[protein] + 4 Fe(3+) + 2 hydrogen sulfide + 2 5'-deoxyadenosine + 2 L-methionine + 2 reduced [2Fe-2S]-[ferredoxin]. It functions in the pathway protein modification; protein lipoylation via endogenous pathway; protein N(6)-(lipoyl)lysine from octanoyl-[acyl-carrier-protein]: step 2/2. Catalyzes the radical-mediated insertion of two sulfur atoms into the C-6 and C-8 positions of the octanoyl moiety bound to the lipoyl domains of lipoate-dependent enzymes, thereby converting the octanoylated domains into lipoylated derivatives. The protein is Lipoyl synthase of Buchnera aphidicola subsp. Acyrthosiphon pisum (strain APS) (Acyrthosiphon pisum symbiotic bacterium).